Reading from the N-terminus, the 343-residue chain is Squamosa promoter-binding-like protein 11 (343 aa).

Residues 1 to 48 (MECNPVSSTTSSSLLWDWDATASAEPPPPPGKRGGRDSSSASASAKRG) form a disordered region. Low complexity-rich tracts occupy residues 7–19 (SSTT…WDWD) and 37–48 (DSSSASASAKRG). The segment at 64-141 (APRCQVEGCG…SDHNARRRKP (78 aa)) adopts an SBP-type zinc-finger fold. 8 residues coordinate Zn(2+): Cys-67, Cys-72, Cys-89, His-92, Cys-108, Cys-111, His-115, and Cys-127. The Bipartite nuclear localization signal motif lies at 124–140 (KRSCRRRLSDHNARRRK).

In terms of tissue distribution, expressed in stems, leaf sheaths, and young panicles.

The protein localises to the nucleus. In terms of biological role, trans-acting factor that binds specifically to the consensus nucleotide sequence 5'-TNCGTACAA-3'. May be involved in panicle development. The protein is Squamosa promoter-binding-like protein 11 (SPL11) of Oryza sativa subsp. japonica (Rice).